The primary structure comprises 343 residues: Holliday junction branch migration complex subunit RuvB (343 aa).

The large ATPase domain (RuvB-L) stretch occupies residues 1–185; the sequence is MMNENLDATG…FGISSRLQYY (185 aa). ATP is bound by residues L24, R25, G66, K69, T70, T71, 132–134, R175, Y185, and R222; that span reads EDY. Mg(2+) is bound at residue T70. The tract at residues 186–256 is small ATPAse domain (RuvB-S); sequence STELLSGIVE…IAKFGLKALN (71 aa). Residues 259–343 form a head domain (RuvB-H) region; that stretch reads AHGLDEMDNK…GSNQGGLFDN (85 aa). 2 residues coordinate DNA: R314 and R319.

The protein belongs to the RuvB family. As to quaternary structure, homohexamer. Forms an RuvA(8)-RuvB(12)-Holliday junction (HJ) complex. HJ DNA is sandwiched between 2 RuvA tetramers; dsDNA enters through RuvA and exits via RuvB. An RuvB hexamer assembles on each DNA strand where it exits the tetramer. Each RuvB hexamer is contacted by two RuvA subunits (via domain III) on 2 adjacent RuvB subunits; this complex drives branch migration. In the full resolvosome a probable DNA-RuvA(4)-RuvB(12)-RuvC(2) complex forms which resolves the HJ.

It localises to the cytoplasm. It carries out the reaction ATP + H2O = ADP + phosphate + H(+). The RuvA-RuvB-RuvC complex processes Holliday junction (HJ) DNA during genetic recombination and DNA repair, while the RuvA-RuvB complex plays an important role in the rescue of blocked DNA replication forks via replication fork reversal (RFR). RuvA specifically binds to HJ cruciform DNA, conferring on it an open structure. The RuvB hexamer acts as an ATP-dependent pump, pulling dsDNA into and through the RuvAB complex. RuvB forms 2 homohexamers on either side of HJ DNA bound by 1 or 2 RuvA tetramers; 4 subunits per hexamer contact DNA at a time. Coordinated motions by a converter formed by DNA-disengaged RuvB subunits stimulates ATP hydrolysis and nucleotide exchange. Immobilization of the converter enables RuvB to convert the ATP-contained energy into a lever motion, pulling 2 nucleotides of DNA out of the RuvA tetramer per ATP hydrolyzed, thus driving DNA branch migration. The RuvB motors rotate together with the DNA substrate, which together with the progressing nucleotide cycle form the mechanistic basis for DNA recombination by continuous HJ branch migration. Branch migration allows RuvC to scan DNA until it finds its consensus sequence, where it cleaves and resolves cruciform DNA. This chain is Holliday junction branch migration complex subunit RuvB, found in Christiangramia forsetii (strain DSM 17595 / CGMCC 1.15422 / KT0803) (Gramella forsetii).